We begin with the raw amino-acid sequence, 129 residues long: Prefoldin subunit 6 (129 aa).

A2 is modified (N-acetylalanine). N6-acetyllysine is present on K21. N6-acetyllysine; alternate is present on K66. K66 participates in a covalent cross-link: Glycyl lysine isopeptide (Lys-Gly) (interchain with G-Cter in SUMO1); alternate. K66 participates in a covalent cross-link: Glycyl lysine isopeptide (Lys-Gly) (interchain with G-Cter in SUMO2); alternate.

It belongs to the prefoldin subunit beta family. As to quaternary structure, heterohexamer of two PFD-alpha type and four PFD-beta type subunits. Component of the PAQosome complex which is responsible for the biogenesis of several protein complexes and which consists of R2TP complex members RUVBL1, RUVBL2, RPAP3 and PIH1D1, URI complex members PFDN2, PFDN6, PDRG1, UXT and URI1 as well as ASDURF, POLR2E and DNAAF10/WDR92.

Binds specifically to cytosolic chaperonin (c-CPN) and transfers target proteins to it. Binds to nascent polypeptide chain and promotes folding in an environment in which there are many competing pathways for nonnative proteins. The chain is Prefoldin subunit 6 (PFDN6) from Canis lupus familiaris (Dog).